Here is a 578-residue protein sequence, read N- to C-terminus: MACGFRRAIACQLSRVLNLPPENLITSISAVPISQKEEVADFQLSVDSLLEKDNDHSRPDIQVQAKRLAEKLRCDTVVSEISTGQRTVNFKINRELLTKTVLQQVIEDGSKYGLKSELFSGLPQKKIVVEFSSPNVAKKFHVGHLRSTIIGNFIANLKEALGHQVIRINYLGDWGMQFGLLGTGFQLFGYEEKLQSNPLQHLFEVYVQVNKEAADDKSVAKAAQEFFQRLELGDVQALSLWQKFRDLSIEEYIRVYKRLGVYFDEYSGESFYREKSQEVLKLLESKGLLLRTIKGTAVVDLSGNGDPSSICTVMRSDGTSLYATRDLAAAIDRMDKYNFDTMIYVTDKGQKKHFQQVFQMLKIMGYDWAERCQHVPFGVVQGMKTRRGDVTFLEDVLNEIQLRMLQNMASIKTTKELKNPQETAERVGLAALIIQDFKGLLLSDYKFSWDRVFQSRGDTGVFLQYTHARLHSLEETFGCGYLNDFNTACLQEPQSVSILQHLLRFDEVLYKSSQDFQPRHIVSYLLTLSHLAAVAHKTLQIKDSPPEVAGARLHLFKAVRSVLANGMKLLGITPVCRM.

Residues 1–16 (MACGFRRAIACQLSRV) constitute a mitochondrion transit peptide. L-arginine is bound by residues 133–135 (SPN), His144, Tyr322, Asp326, and Gln350. Positions 133–144 (SPNVAKKFHVGH) match the 'HIGH' region motif. The residue at position 568 (Lys568) is an N6-acetyllysine.

Belongs to the class-I aminoacyl-tRNA synthetase family.

The protein localises to the mitochondrion membrane. The enzyme catalyses tRNA(Arg) + L-arginine + ATP = L-arginyl-tRNA(Arg) + AMP + diphosphate. Its function is as follows. Catalyzes the attachment of arginine to tRNA(Arg) in a two-step reaction: arginine is first activated by ATP to form Arg-AMP and then transferred to the acceptor end of tRNA(Arg). This Pongo abelii (Sumatran orangutan) protein is Probable arginine--tRNA ligase, mitochondrial (RARS2).